Reading from the N-terminus, the 260-residue chain is Deoxycytidine kinase (260 aa).

S11 and S15 each carry phosphoserine; by CK1. 28–36 (GNIAAGKST) lines the ATP pocket. E53 serves as a coordination point for substrate. T72 is subject to Phosphothreonine; by CK1. The residue at position 74 (S74) is a Phosphoserine; by CK1. Substrate contacts are provided by Y86 and Q97. The Proton acceptor role is filled by E127. Residues R128 and D133 each contribute to the substrate site. 188 to 192 (RIYIR) is an ATP binding site. Position 197 (E197) interacts with substrate. Residue 240-242 (LDF) coordinates ATP.

Belongs to the DCK/DGK family. As to quaternary structure, homodimer. Post-translationally, phosphorylated and activated in vitro upon phosphorylation at Ser-74 by CSNK1D/CK1.

It localises to the nucleus. It carries out the reaction 2'-deoxycytidine + a ribonucleoside 5'-triphosphate = dCMP + a ribonucleoside 5'-diphosphate + H(+). The catalysed reaction is 2'-deoxyadenosine + ATP = dAMP + ADP + H(+). It catalyses the reaction 2'-deoxyguanosine + ATP = dGMP + ADP + H(+). Phosphorylates the deoxyribonucleosides deoxycytidine, deoxyguanosine and deoxyadenosine. The sequence is that of Deoxycytidine kinase (Dck) from Rattus norvegicus (Rat).